An 835-amino-acid chain; its full sequence is Translation initiation factor IF-2 (835 aa).

The interval 1-240 (MSDSDGKKTL…RKQERARQKA (240 aa)) is disordered. Residues 50–59 (AGKGGAGGVA) are compositionally biased toward gly residues. Over residues 86–152 (KAREAEEAAQ…AEAAKKRAAA (67 aa)) the composition is skewed to basic and acidic residues. Over residues 153-169 (DKAAAAAPKSDAGVAPA) the composition is skewed to low complexity. A compositionally biased stretch (basic and acidic residues) spans 184–205 (RKAEREREERGRGAKGRNDGGR). In terms of domain architecture, tr-type G spans 332–500 (PRPPVITIMG…AIALQAEILE (169 aa)). The segment at 341–348 (GHVDHGKT) is G1. 341–348 (GHVDHGKT) is a GTP binding site. The interval 366-370 (GITQH) is G2. The tract at residues 388–391 (DTPG) is G3. GTP contacts are provided by residues 388–392 (DTPGH) and 442–445 (NKID). The tract at residues 442-445 (NKID) is G4. Residues 478–480 (SAH) form a G5 region.

It belongs to the TRAFAC class translation factor GTPase superfamily. Classic translation factor GTPase family. IF-2 subfamily.

It localises to the cytoplasm. One of the essential components for the initiation of protein synthesis. Protects formylmethionyl-tRNA from spontaneous hydrolysis and promotes its binding to the 30S ribosomal subunits. Also involved in the hydrolysis of GTP during the formation of the 70S ribosomal complex. This Ruegeria sp. (strain TM1040) (Silicibacter sp.) protein is Translation initiation factor IF-2.